We begin with the raw amino-acid sequence, 259 residues long: Undecaprenyl-diphosphatase 4 (259 aa).

The next 8 helical transmembrane spans lie at Met1–Ile21, Ala39–Tyr59, Phe71–Leu91, Ile99–Met119, Ile133–Ile153, Ala173–Phe193, Ser208–Ile228, and Phe239–Phe259.

Belongs to the UppP family.

The protein localises to the cell membrane. It catalyses the reaction di-trans,octa-cis-undecaprenyl diphosphate + H2O = di-trans,octa-cis-undecaprenyl phosphate + phosphate + H(+). In terms of biological role, catalyzes the dephosphorylation of undecaprenyl diphosphate (UPP). Confers resistance to bacitracin. The polypeptide is Undecaprenyl-diphosphatase 4 (Bacillus thuringiensis (strain Al Hakam)).